Consider the following 238-residue polypeptide: Cysteine-rich venom protein pseudechetoxin-like (238 aa).

Positions 1–19 (MIAFIVLLSLAAVLQQSSG) are cleaved as a signal peptide. Residues 20 to 28 (TVDFASESS) constitute a propeptide that is removed on maturation. Residues 38-164 (VDKHNALRRS…STKYLYVCQY (127 aa)) enclose the SCP domain. Disulfide bonds link Cys-75–Cys-153, Cys-92–Cys-165, Cys-148–Cys-162, Cys-184–Cys-191, Cys-187–Cys-196, Cys-200–Cys-233, Cys-209–Cys-227, and Cys-218–Cys-231. The ShKT domain maps to 200–233 (CKYEDDFSNCKALAKNSKCQTEWIKSKCPAACFC).

It belongs to the CRISP family. As to expression, expressed by the venom gland.

The protein localises to the secreted. Its function is as follows. Blocks olfactory (CNGA2) and retinal (CNGA1) CNG channel currents. Does not affect neither depolarization- nor caffeine-induced contraction of smooth muscle. This is Cysteine-rich venom protein pseudechetoxin-like from Notechis scutatus scutatus (Mainland tiger snake).